A 329-amino-acid polypeptide reads, in one-letter code: MKLAIDAMGGDHAPKAIVEGVKRFVAQYPNESMELFLVGDEVKIASYGLDDPRVTVVPASEIITGEDEPVRAVRRKKDSSLVVAAQLVKEGKADALVSAGNTGALMAASLFIIGRIPGIERPALSPTFPTYTGSGVVVLDVGANPDAKAEHLVDYAIMGSLYAEHVRGIKTPRVALLNIGTEAGKGNALTKEAFPLLEQAPVHFVGNVEAREAMSGDVDVIVTEGFAGNILLKGVEGSSSMLMKMMKEQFTSDLVSKLAALILKPKLRRLKETLDYREHGGAGLFGINAPVIKAHGSSDALAIMSALKQAKIMVDHDVVEKIKRAKAID.

The protein belongs to the PlsX family. In terms of assembly, homodimer. Probably interacts with PlsY.

It is found in the cytoplasm. The enzyme catalyses a fatty acyl-[ACP] + phosphate = an acyl phosphate + holo-[ACP]. The protein operates within lipid metabolism; phospholipid metabolism. Catalyzes the reversible formation of acyl-phosphate (acyl-PO(4)) from acyl-[acyl-carrier-protein] (acyl-ACP). This enzyme utilizes acyl-ACP as fatty acyl donor, but not acyl-CoA. This chain is Phosphate acyltransferase, found in Exiguobacterium sp. (strain ATCC BAA-1283 / AT1b).